A 103-amino-acid chain; its full sequence is Small ribosomal subunit protein bS6c (103 aa).

This sequence belongs to the bacterial ribosomal protein bS6 family.

The protein resides in the plastid. It is found in the chloroplast. In terms of biological role, binds together with bS18 to 16S ribosomal RNA. The sequence is that of Small ribosomal subunit protein bS6c from Gracilaria tenuistipitata var. liui (Red alga).